The primary structure comprises 471 residues: Glutamate--tRNA ligase (471 aa).

A 'HIGH' region motif is present at residues 9–19; that stretch reads PSPTGYLHVGG. Cys-98, Cys-100, Cys-125, and Asp-127 together coordinate Zn(2+). Positions 237–241 match the 'KMSKS' region motif; sequence KLSKR. ATP is bound at residue Lys-240.

Belongs to the class-I aminoacyl-tRNA synthetase family. Glutamate--tRNA ligase type 1 subfamily. Monomer. It depends on Zn(2+) as a cofactor.

The protein localises to the cytoplasm. The enzyme catalyses tRNA(Glu) + L-glutamate + ATP = L-glutamyl-tRNA(Glu) + AMP + diphosphate. Its function is as follows. Catalyzes the attachment of glutamate to tRNA(Glu) in a two-step reaction: glutamate is first activated by ATP to form Glu-AMP and then transferred to the acceptor end of tRNA(Glu). This chain is Glutamate--tRNA ligase, found in Yersinia pestis.